Reading from the N-terminus, the 134-residue chain is Profilin-3 (134 aa).

Cys-13 and Cys-118 are disulfide-bonded. The Involved in PIP2 interaction motif lies at 84 to 100; sequence AVIRGKKGSGGITIKKT. A Phosphothreonine modification is found at Thr-114.

Belongs to the profilin family. Occurs in many kinds of cells as a complex with monomeric actin in a 1:1 ratio. In terms of processing, phosphorylated by MAP kinases.

The protein resides in the cytoplasm. It is found in the cytoskeleton. In terms of biological role, binds to actin and affects the structure of the cytoskeleton. At high concentrations, profilin prevents the polymerization of actin, whereas it enhances it at low concentrations. This Olea europaea (Common olive) protein is Profilin-3.